Reading from the N-terminus, the 400-residue chain is Ribosomal RNA large subunit methyltransferase I (400 aa).

The 79-residue stretch at 6–84 (FPRLVLAKGR…NEAIDSAFFE (79 aa)) folds into the PUA domain.

It belongs to the methyltransferase superfamily. RlmI family.

It localises to the cytoplasm. It carries out the reaction cytidine(1962) in 23S rRNA + S-adenosyl-L-methionine = 5-methylcytidine(1962) in 23S rRNA + S-adenosyl-L-homocysteine + H(+). Functionally, specifically methylates the cytosine at position 1962 (m5C1962) of 23S rRNA. This Klebsiella pneumoniae subsp. pneumoniae (strain ATCC 700721 / MGH 78578) protein is Ribosomal RNA large subunit methyltransferase I.